The primary structure comprises 172 residues: T-cell receptor gamma chain C region C7.5 (172 aa).

The c region stretch occupies residues 1–140 (DKKLDADISP…QFTITSAYYT (140 aa)). The helical transmembrane segment at 141–160 (YLLLLLKSVIYLAIISFSLL) threads the bilayer. The Cytoplasmic portion of the chain corresponds to 161–172 (RRTSVCCNEKKS).

The protein resides in the membrane. The protein is T-cell receptor gamma chain C region C7.5 of Mus musculus (Mouse).